We begin with the raw amino-acid sequence, 265 residues long: Phosphatidylserine decarboxylase proenzyme (265 aa).

Ser183 serves as the catalytic Schiff-base intermediate with substrate; via pyruvic acid. At Ser183 the chain carries Pyruvic acid (Ser); by autocatalysis. The segment at 216-246 is disordered; sequence TAPQTESEPESEPALQTAPVETAANPSAEQR.

It belongs to the phosphatidylserine decarboxylase family. PSD-A subfamily. As to quaternary structure, heterodimer of a large membrane-associated beta subunit and a small pyruvoyl-containing alpha subunit. Requires pyruvate as cofactor. Post-translationally, is synthesized initially as an inactive proenzyme. Formation of the active enzyme involves a self-maturation process in which the active site pyruvoyl group is generated from an internal serine residue via an autocatalytic post-translational modification. Two non-identical subunits are generated from the proenzyme in this reaction, and the pyruvate is formed at the N-terminus of the alpha chain, which is derived from the carboxyl end of the proenzyme. The post-translation cleavage follows an unusual pathway, termed non-hydrolytic serinolysis, in which the side chain hydroxyl group of the serine supplies its oxygen atom to form the C-terminus of the beta chain, while the remainder of the serine residue undergoes an oxidative deamination to produce ammonia and the pyruvoyl prosthetic group on the alpha chain.

The protein localises to the cell membrane. It catalyses the reaction a 1,2-diacyl-sn-glycero-3-phospho-L-serine + H(+) = a 1,2-diacyl-sn-glycero-3-phosphoethanolamine + CO2. It participates in phospholipid metabolism; phosphatidylethanolamine biosynthesis; phosphatidylethanolamine from CDP-diacylglycerol: step 2/2. Catalyzes the formation of phosphatidylethanolamine (PtdEtn) from phosphatidylserine (PtdSer). The polypeptide is Phosphatidylserine decarboxylase proenzyme (Neisseria meningitidis serogroup B (strain ATCC BAA-335 / MC58)).